Reading from the N-terminus, the 175-residue chain is Small ribosomal subunit protein uS5 (175 aa).

Residues 1–21 (MAKPERNKKPQQAEERDDGMR) form a disordered region. Residues 20 to 83 (MREKMVAVNR…EEARRKMAKV (64 aa)) form the S5 DRBM domain.

The protein belongs to the universal ribosomal protein uS5 family. Part of the 30S ribosomal subunit. Contacts proteins S4 and S8.

With S4 and S12 plays an important role in translational accuracy. Functionally, located at the back of the 30S subunit body where it stabilizes the conformation of the head with respect to the body. The protein is Small ribosomal subunit protein uS5 of Dechloromonas aromatica (strain RCB).